A 503-amino-acid polypeptide reads, in one-letter code: Cytochrome P450 714C1 (503 aa).

Residues 1–6 lie on the Lumenal side of the membrane; the sequence is MEKLLA. The chain crosses the membrane as a helical; Signal-anchor for type III membrane protein span at residues 7 to 27; it reads LIVVLVILLSLALFYLCNILW. Residues 28–503 are Cytoplasmic-facing; sequence LRAVKIRKKL…GLPLMVTKLP (476 aa). Cys450 serves as a coordination point for heme.

This sequence belongs to the cytochrome P450 family. Requires heme as cofactor.

It localises to the membrane. Its function is as follows. Probably not involved in gibberellin metabolism since over-expression of CYP714C1 in a heterologous system does not induce semi-dwarfism. This chain is Cytochrome P450 714C1 (CYP714C1), found in Oryza sativa subsp. japonica (Rice).